We begin with the raw amino-acid sequence, 183 residues long: ATP synthase subunit b, chloroplastic (183 aa).

A helical transmembrane segment spans residues 28-48; sequence DIFEANVINILLLLFGLIYVL.

Belongs to the ATPase B chain family. In terms of assembly, F-type ATPases have 2 components, F(1) - the catalytic core - and F(0) - the membrane proton channel. F(1) has five subunits: alpha(3), beta(3), gamma(1), delta(1), epsilon(1). F(0) has four main subunits: a(1), b(1), b'(1) and c(10-14). The alpha and beta chains form an alternating ring which encloses part of the gamma chain. F(1) is attached to F(0) by a central stalk formed by the gamma and epsilon chains, while a peripheral stalk is formed by the delta, b and b' chains.

It localises to the plastid. The protein localises to the chloroplast thylakoid membrane. Functionally, f(1)F(0) ATP synthase produces ATP from ADP in the presence of a proton or sodium gradient. F-type ATPases consist of two structural domains, F(1) containing the extramembraneous catalytic core and F(0) containing the membrane proton channel, linked together by a central stalk and a peripheral stalk. During catalysis, ATP synthesis in the catalytic domain of F(1) is coupled via a rotary mechanism of the central stalk subunits to proton translocation. Component of the F(0) channel, it forms part of the peripheral stalk, linking F(1) to F(0). In Porphyra purpurea (Red seaweed), this protein is ATP synthase subunit b, chloroplastic.